We begin with the raw amino-acid sequence, 609 residues long: UvrABC system protein C (609 aa).

The GIY-YIG domain occupies 19-97 (ASPGCYLWKS…IKKHNPRFNV (79 aa)). Residues 208-243 (ESLVSDLNIKMSNASERLDFEKAARYRDMLQRIQNF) enclose the UVR domain.

This sequence belongs to the UvrC family. Interacts with UvrB in an incision complex.

The protein resides in the cytoplasm. In terms of biological role, the UvrABC repair system catalyzes the recognition and processing of DNA lesions. UvrC both incises the 5' and 3' sides of the lesion. The N-terminal half is responsible for the 3' incision and the C-terminal half is responsible for the 5' incision. The sequence is that of UvrABC system protein C from Leptospira interrogans serogroup Icterohaemorrhagiae serovar copenhageni (strain Fiocruz L1-130).